A 3630-amino-acid polypeptide reads, in one-letter code: Trimeric autotransporter adhesin AtaA (3630 aa).

The signal sequence occupies residues 1–23 (MNKIYKVIWNATLLAWVAVSELA). A surface exposed passenger domain region spans residues 24–3487 (KGKTKSTTSK…TNQAVVNYLG (3464 aa)). Positions 108-315 (SIAIGENAQG…ASDAVTVAQL (208 aa)) are N-terminal YadA-like head. The segment at 316–2904 (DKAYDDTNGR…GRAATEEQLK (2589 aa)) is N-terminal stalk. The interval 2905–3169 (AVITSNITEV…DSDAVNVAQL (265 aa)) is C-terminal YadA-like head. The interval 3170–3561 (KAVGNQVVTT…DVEKKANAGI (392 aa)) is C-terminal stalk. The outer membrane translocation of the passenger domain stretch occupies residues 3539–3574 (LDNAFRITNNRIDDVEKKANAGIAAAMALESAPYVP). The next 4 beta stranded transmembrane spans lie at 3575–3585 (GKYTYAAGAAY), 3589–3599 (ENAVGVTLRKT), 3608–3614 (TGGVAAA), and 3618–3629 (DASVRIGISGVI). The segment at 3575–3630 (GKYTYAAGAAYHGGENAVGVTLRKTADNGRWSITGGVAAASQGDASVRIGISGVID) is translocator domain.

It belongs to the autotransporter-2 (AT-2) (TC 1.B.40) family. In terms of assembly, homotrimer. Interacts with TpgA.

The protein localises to the cell surface. Its subcellular location is the cell outer membrane. In terms of biological role, responsible for autoagglutination, and for adhesion to abiotic and biotic surfaces such as polystyrene (PS), type I collagen, polypropylene (PP), polyvinylchloride (PVC), glass and stainless steel (SS). Adhesion is much stronger than that mediated by Yersinia YadA in a comparative assay. Confers autoagglutination and binding to PS, type I collagen, PP, PVC, glass and SS upon expression in Acinetobacter baylyi strain ADP1. Involved in rapid, irreversible adherence to polyurethane. Forms an unusual biofilm. An extended, surface exposed fiber binds to quartz crystals, PS and glass. It can be removed by washing in distilled water. The sequence is that of Trimeric autotransporter adhesin AtaA from Acinetobacter sp. (strain Tol 5).